The following is a 361-amino-acid chain: Biotin synthase (361 aa).

The interval 14–38 (AQRTPEPLPPTSQGLARPSHDVVRG) is disordered. Residues 86–315 (HKGGPAALCG…ARDILVCGGR (230 aa)) form the Radical SAM core domain. Residues Cys104, Cys108, and Cys111 each coordinate [4Fe-4S] cluster. Cys180 and Cys240 together coordinate [2Fe-2S] cluster.

The protein belongs to the radical SAM superfamily. Biotin synthase family. In terms of assembly, homodimer. It depends on [4Fe-4S] cluster as a cofactor. [2Fe-2S] cluster serves as cofactor.

The enzyme catalyses (4R,5S)-dethiobiotin + (sulfur carrier)-SH + 2 reduced [2Fe-2S]-[ferredoxin] + 2 S-adenosyl-L-methionine = (sulfur carrier)-H + biotin + 2 5'-deoxyadenosine + 2 L-methionine + 2 oxidized [2Fe-2S]-[ferredoxin]. It participates in cofactor biosynthesis; biotin biosynthesis; biotin from 7,8-diaminononanoate: step 2/2. Its function is as follows. Catalyzes the conversion of dethiobiotin (DTB) to biotin by the insertion of a sulfur atom into dethiobiotin via a radical-based mechanism. This chain is Biotin synthase, found in Nitratidesulfovibrio vulgaris (strain DP4) (Desulfovibrio vulgaris).